Here is a 226-residue protein sequence, read N- to C-terminus: Glycerol-3-phosphate acyltransferase (226 aa).

A run of 6 helical transmembrane segments spans residues Met1–Phe21, Gly56–Val76, Leu102–Phe122, Ile134–Val154, Ile159–Leu178, and Leu182–Leu197.

Belongs to the PlsY family. In terms of assembly, probably interacts with PlsX.

The protein localises to the cell inner membrane. The catalysed reaction is an acyl phosphate + sn-glycerol 3-phosphate = a 1-acyl-sn-glycero-3-phosphate + phosphate. It participates in lipid metabolism; phospholipid metabolism. In terms of biological role, catalyzes the transfer of an acyl group from acyl-phosphate (acyl-PO(4)) to glycerol-3-phosphate (G3P) to form lysophosphatidic acid (LPA). This enzyme utilizes acyl-phosphate as fatty acyl donor, but not acyl-CoA or acyl-ACP. The sequence is that of Glycerol-3-phosphate acyltransferase from Trichormus variabilis (strain ATCC 29413 / PCC 7937) (Anabaena variabilis).